A 103-amino-acid polypeptide reads, in one-letter code: NADH-quinone oxidoreductase subunit K 1 (103 aa).

3 helical membrane-spanning segments follow: residues 6–26 (LGHF…GIFL), 32–52 (IIIL…LVAF), and 67–87 (LVLT…VVFF).

This sequence belongs to the complex I subunit 4L family. NDH-1 is composed of 14 different subunits. Subunits NuoA, H, J, K, L, M, N constitute the membrane sector of the complex.

The protein resides in the cell inner membrane. It catalyses the reaction a quinone + NADH + 5 H(+)(in) = a quinol + NAD(+) + 4 H(+)(out). Functionally, NDH-1 shuttles electrons from NADH, via FMN and iron-sulfur (Fe-S) centers, to quinones in the respiratory chain. The immediate electron acceptor for the enzyme in this species is believed to be ubiquinone. Couples the redox reaction to proton translocation (for every two electrons transferred, four hydrogen ions are translocated across the cytoplasmic membrane), and thus conserves the redox energy in a proton gradient. The sequence is that of NADH-quinone oxidoreductase subunit K 1 from Rhodopseudomonas palustris (strain ATCC BAA-98 / CGA009).